We begin with the raw amino-acid sequence, 250 residues long: Phosphate import ATP-binding protein PstB (250 aa).

In terms of domain architecture, ABC transporter spans 4 to 245; it reads LTARDLKLSF…PRHELTEKYV (242 aa). ATP is bound at residue 36–43; it reads GPSGSGKS.

Belongs to the ABC transporter superfamily. Phosphate importer (TC 3.A.1.7) family. As to quaternary structure, the complex is composed of two ATP-binding proteins (PstB), two transmembrane proteins (PstC and PstA) and a solute-binding protein (PstS).

The protein resides in the cell membrane. It carries out the reaction phosphate(out) + ATP + H2O = ADP + 2 phosphate(in) + H(+). Its function is as follows. Part of the ABC transporter complex PstSACB involved in phosphate import. Responsible for energy coupling to the transport system. The polypeptide is Phosphate import ATP-binding protein PstB (Pyrobaculum aerophilum (strain ATCC 51768 / DSM 7523 / JCM 9630 / CIP 104966 / NBRC 100827 / IM2)).